A 192-amino-acid polypeptide reads, in one-letter code: Orotate phosphoribosyltransferase 2 (192 aa).

116–124 (EDIVTTGLS) serves as a coordination point for 5-phospho-alpha-D-ribose 1-diphosphate. Positions 120 and 148 each coordinate orotate.

This sequence belongs to the purine/pyrimidine phosphoribosyltransferase family. PyrE subfamily. In terms of assembly, homodimer. The cofactor is Mg(2+).

It carries out the reaction orotidine 5'-phosphate + diphosphate = orotate + 5-phospho-alpha-D-ribose 1-diphosphate. It functions in the pathway pyrimidine metabolism; UMP biosynthesis via de novo pathway; UMP from orotate: step 1/2. Functionally, catalyzes the transfer of a ribosyl phosphate group from 5-phosphoribose 1-diphosphate to orotate, leading to the formation of orotidine monophosphate (OMP). The protein is Orotate phosphoribosyltransferase 2 of Mesorhizobium japonicum (strain LMG 29417 / CECT 9101 / MAFF 303099) (Mesorhizobium loti (strain MAFF 303099)).